The chain runs to 389 residues: Glycerol-3-phosphate dehydrogenase [NAD(+)] 2 (389 aa).

NAD(+)-binding positions include 40–45, Phe128, Lys151, and Ala184; that span reads GSGNWG. Substrate is bound at residue Lys151. Lys244 functions as the Proton acceptor in the catalytic mechanism. NAD(+) is bound by residues Arg309 and Gln338. 309–310 provides a ligand contact to substrate; the sequence is RN.

Belongs to the NAD-dependent glycerol-3-phosphate dehydrogenase family.

The protein resides in the cytoplasm. It carries out the reaction sn-glycerol 3-phosphate + NAD(+) = dihydroxyacetone phosphate + NADH + H(+). This chain is Glycerol-3-phosphate dehydrogenase [NAD(+)] 2 (GPD2), found in Zygosaccharomyces rouxii.